A 278-amino-acid polypeptide reads, in one-letter code: Large ribosomal subunit protein uL2 (278 aa).

2 disordered regions span residues 27 to 58 (STPE…GGGH) and 224 to 278 (VVMN…GKKR). A compositionally biased stretch (basic residues) spans 37–58 (LHGKGGRNAHGRITTRHKGGGH). Residues 253–268 (PEGRTRKPNKPSDKLI) show a composition bias toward basic and acidic residues. Basic residues predominate over residues 269 to 278 (VRRRRTGKKR).

This sequence belongs to the universal ribosomal protein uL2 family. In terms of assembly, part of the 50S ribosomal subunit. Forms a bridge to the 30S subunit in the 70S ribosome.

Its function is as follows. One of the primary rRNA binding proteins. Required for association of the 30S and 50S subunits to form the 70S ribosome, for tRNA binding and peptide bond formation. It has been suggested to have peptidyltransferase activity; this is somewhat controversial. Makes several contacts with the 16S rRNA in the 70S ribosome. The chain is Large ribosomal subunit protein uL2 from Mycobacterium sp. (strain KMS).